The following is a 603-amino-acid chain: Prosaposin receptor GPR37 (603 aa).

Residues 1–26 form the signal peptide; that stretch reads MPAPGAPLSRTSRLLLLLLFKVSVSA. Residues 27 to 255 are Extracellular-facing; sequence ALSFVPEPRN…QESYGAYAVM (229 aa). Asparagine 36 is a glycosylation site (N-linked (GlcNAc...) asparagine). Positions 39-232 are disordered; sequence CLGESCSPLI…GGPRRGNSTN (194 aa). Basic and acidic residues-rich tracts occupy residues 51 to 79, 145 to 158, and 165 to 175; these read RSRD…EAEV, TSER…RDEI, and HSVKTEPEPRD. 2 N-linked (GlcNAc...) asparagine glycosylation sites follow: asparagine 212 and asparagine 229. The chain crosses the membrane as a helical span at residues 256-276; the sequence is CLSVVIFGTGIIGNLAVMCIV. The Cytoplasmic portion of the chain corresponds to 277 to 289; the sequence is CHNYYMRSISNSL. The helical transmembrane segment at 290–310 threads the bilayer; sequence LANLAFWDFLIIFFCLPLVIF. At 311–325 the chain is on the extracellular side; it reads HELTKKWLLEDFSCK. Cysteine 324 and cysteine 409 are disulfide-bonded. The chain crosses the membrane as a helical span at residues 326–346; sequence IVPYIEVASLGVTTFTLCALC. Topologically, residues 347 to 369 are cytoplasmic; that stretch reads IDRFRAATNVQMYYEMIENCSST. Residues 370–390 traverse the membrane as a helical segment; that stretch reads TAKLAVIWVGALLLALPEVVL. Topologically, residues 391 to 433 are extracellular; that stretch reads RQLSKEDLGFSGQAPAERCVIKISPDLPDTIYVLALTYDGARL. The helical transmembrane segment at 434 to 454 threads the bilayer; that stretch reads WWYFGCYFCLPTLFTITCSLV. Topologically, residues 455–483 are cytoplasmic; the sequence is TARKIRKAEKASTRGNKRQIHLESQMNCT. Residues 484–504 form a helical membrane-spanning segment; it reads VVALTILYGFCIIPENICNIV. The Extracellular segment spans residues 505–521; that stretch reads TAYMATGVSQQTMDLLN. Residues 522-542 traverse the membrane as a helical segment; that stretch reads IISQFLLFFKSCVTPVLLFCL. Topologically, residues 543-603 are cytoplasmic; that stretch reads CRPFSRAFME…STFASVGTHC (61 aa).

Belongs to the G-protein coupled receptor 1 family. In terms of assembly, forms a complex with PRKN, STUB1 and HSP70. The amount of STUB1 in the complex increases during ER stress. STUB1 promotes the dissociation of HSP70 from PRKN, thus facilitating PRKN-mediated GPR37 ubiquitination. Interacts with PACRG. The N-terminus is cleaved by ADAM10 metalloproteinase; mediating limited proteolysis leading to the release of receptor ectodomain by shedding. In addition, cleaved by FURIN between Arg-53 and Asp-54. In terms of processing, ubiquitinated by PRKN in the presence of UBE2E1 and UBE2L3 in the endoplasmic reticulum. The unfolded form is specifically ubiquitinated by SYVN1, which promotes its proteasomal degradation and prevents neuronal cell death. In terms of tissue distribution, highly expressed in the brain. High levels of expression were seen in fiber tracts such as the corpus callosum, anterior commissure, fornix, internal capsule, cerebral peduncles, and stria terminalis. Additionally, moderate levels of expression were seen in the pyramidal tracts and cerebellar peduncles, as well as in the spinal tract of the trigeminal nerve and the spinal fasciculi.

The protein localises to the cell projection. It localises to the dendrite. Its subcellular location is the synapse. The protein resides in the cell membrane. It is found in the endoplasmic reticulum membrane. Its function is as follows. G-protein-coupled receptor that plays a role in several physiological pathways such as resolution of inflammatory pain and oligodendrocyte differentiation. Acts as a receptor for several ligands including prosaposin, osteocalcin or neuroprotectin D1. Ligand binding induces endocytosis, followed by an ERK phosphorylation cascade. Acts as a receptor for osteocalcin (OCN) to regulate oligodendrocyte differentiation and central nervous system myelination. Mechanistically, plays a negative role in oligodendrocyte differentiation and myelination during development via activation of the ERK1/2 signaling pathway. Therefore, regulates the stability of myelin or resistance of myelin itself to demyelination. Upon activation by neuroprotectin D1 (NPD1), promotes the activation of phagocytosis in macrophages as well as the shift in cytokine release toward an anti-inflammatory profile, and thus helps to reverse inflammatory pain. In addition, the increased macrophage phagocytosis mediates protection against sepsis upon pathogen infection. Additionally, extracellular vesicles derived from efferocyte express prosaposin, which binds to macrophage GPR37 to increase expression of the efferocytosis receptor TIM4 via an ERK-AP1-dependent signaling axis, leading to increased macrophage efferocytosis efficiency and accelerated resolution of inflammation. May also act as a maturation factor of LRP6, protecting LRP6 from the endoplasmic reticulum (ER)-associated protein degradation (ERAD) and thereby promoting the Wnt/beta-catenin signaling pathway. The sequence is that of Prosaposin receptor GPR37 (Gpr37) from Rattus norvegicus (Rat).